A 92-amino-acid polypeptide reads, in one-letter code: C-C motif chemokine 4 (92 aa).

Positions 1–23 (MKLCVTVLSLLVLVAAFCSPALS) are cleaved as a signal peptide. Disulfide bonds link cysteine 34–cysteine 58 and cysteine 35–cysteine 74.

Belongs to the intercrine beta (chemokine CC) family. In terms of assembly, homodimer. Interacts with CCR5.

It is found in the secreted. Its function is as follows. Monokine with inflammatory and chemokinetic properties. The protein is C-C motif chemokine 4 (CCL4) of Sus scrofa (Pig).